A 286-amino-acid chain; its full sequence is Mating type protein A-1 (286 aa).

The alpha box DNA-binding region spans 40–95; that stretch reads AAKKKVNGFMSFRSYYSPLFSQLPQKERSPFMTILWQHDPFHNEWNFMCSVYSSIR.

The protein belongs to the MATALPHA1 family.

It localises to the nucleus. Required for expression of the heterokaryon incompatibility and sexual functions. The sequence is that of Mating type protein A-1 (MTA-1) from Neurospora africana.